The following is a 327-amino-acid chain: Porphobilinogen deaminase (327 aa).

The residue at position 250 (cysteine 250) is an S-(dipyrrolylmethanemethyl)cysteine.

The protein belongs to the HMBS family. Monomer. The cofactor is dipyrromethane.

It catalyses the reaction 4 porphobilinogen + H2O = hydroxymethylbilane + 4 NH4(+). It functions in the pathway porphyrin-containing compound metabolism; protoporphyrin-IX biosynthesis; coproporphyrinogen-III from 5-aminolevulinate: step 2/4. Functionally, tetrapolymerization of the monopyrrole PBG into the hydroxymethylbilane pre-uroporphyrinogen in several discrete steps. The sequence is that of Porphobilinogen deaminase from Paraburkholderia phymatum (strain DSM 17167 / CIP 108236 / LMG 21445 / STM815) (Burkholderia phymatum).